The primary structure comprises 572 residues: Proline--tRNA ligase (572 aa).

This sequence belongs to the class-II aminoacyl-tRNA synthetase family. ProS type 1 subfamily. In terms of assembly, homodimer.

The protein resides in the cytoplasm. The catalysed reaction is tRNA(Pro) + L-proline + ATP = L-prolyl-tRNA(Pro) + AMP + diphosphate. Functionally, catalyzes the attachment of proline to tRNA(Pro) in a two-step reaction: proline is first activated by ATP to form Pro-AMP and then transferred to the acceptor end of tRNA(Pro). As ProRS can inadvertently accommodate and process non-cognate amino acids such as alanine and cysteine, to avoid such errors it has two additional distinct editing activities against alanine. One activity is designated as 'pretransfer' editing and involves the tRNA(Pro)-independent hydrolysis of activated Ala-AMP. The other activity is designated 'posttransfer' editing and involves deacylation of mischarged Ala-tRNA(Pro). The misacylated Cys-tRNA(Pro) is not edited by ProRS. The protein is Proline--tRNA ligase of Citrobacter koseri (strain ATCC BAA-895 / CDC 4225-83 / SGSC4696).